We begin with the raw amino-acid sequence, 228 residues long: Protein TIFY 10a (228 aa).

Positions 75–110 (REQEKRQLTIFYGGKVLVFDDFPAEKAKDLMQMASK) constitute a Tify domain. A Jas motif is present at residues 164–189 (PQARKASLHRFLEKRKDRLQAKAPYQ). Residues 166–173 (ARKASLHR) carry the Nuclear localization signal motif. Positions 175 to 228 (LEKRKDRLQAKAPYQGSPSDASPVKKELQESQPWLGLGPQVAAPDLSLRQESSQ) are disordered.

Belongs to the TIFY/JAZ family. Interacts with COI1A and COI1B in a coronatine-dependent manner. Coronatine is an analog of jasmonoyl isoleucine (JA-Ile). In terms of processing, ubiquitinated. Targeted for degradation by the SCF(COI1) E3 ubiquitin ligase-proteasome pathway during jasmonate signaling.

It is found in the nucleus. In terms of biological role, repressor of jasmonate responses. This Oryza sativa subsp. japonica (Rice) protein is Protein TIFY 10a.